We begin with the raw amino-acid sequence, 345 residues long: Serine/arginine-rich splicing factor 6 (345 aa).

An RRM 1 domain is found at 1-72 (MPRVYIGRLS…ERVIVEHARG (72 aa)). Residues S45, S81, and S84 each carry the phosphoserine modification. Residues 75 to 102 (RDRDGYSYGSRSGGGGYSSRRTSGRDKY) are disordered. The RRM 2 domain maps to 110–183 (FRLIVENLSS…RNIRLIEDKP (74 aa)). At K165 the chain carries N6-acetyllysine. The segment at 176 to 345 (IRLIEDKPRT…RSRSRSSSRD (170 aa)) is disordered. K182 is covalently cross-linked (Glycyl lysine isopeptide (Lys-Gly) (interchain with G-Cter in SUMO2)). A compositionally biased stretch (basic residues) spans 185–250 (TSHRRSYSGS…RKSRSKSKSK (66 aa)). 2 stretches are compositionally biased toward basic and acidic residues: residues 264–273 (RSKDEYEKSR) and 282–293 (SPKENGKGDIKS). 2 positions are modified to phosphoserine: S299 and S301. Position 305 is a phosphoserine; by DYRK1A (S305). 2 positions are modified to phosphoserine: S316 and S318. Residues 323–345 (RASRSHSRSRSKSRSRSRSSSRD) show a composition bias toward basic residues.

This sequence belongs to the splicing factor SR family. In terms of assembly, binds SREK1/SFRS12. Interacts with DYRK1A. Post-translationally, extensively phosphorylated on serine residues in the RS domain. Phosphorylated by DYRK1A, probably in the RS domain. Phosphorylation by DYRK1A modulates alternative splice site selection and inhibits the expression of MAPT/Tau exon 10.

The protein localises to the nucleus. It localises to the nucleus speckle. Plays a role in constitutive splicing and modulates the selection of alternative splice sites. Plays a role in the alternative splicing of MAPT/Tau exon 10. Binds to alternative exons of TNC pre-mRNA and promotes the expression of alternatively spliced TNC. Plays a role in wound healing and in the regulation of keratinocyte differentiation and proliferation via its role in alternative splicing. The sequence is that of Serine/arginine-rich splicing factor 6 (SRSF6) from Bos taurus (Bovine).